Here is a 277-residue protein sequence, read N- to C-terminus: Small ribosomal subunit protein uS2 (277 aa).

The tract at residues 254–277 (LAGAGSSALNDSGADLSEANPTEA) is disordered.

The protein belongs to the universal ribosomal protein uS2 family.

In Mycobacterium leprae (strain TN), this protein is Small ribosomal subunit protein uS2 (rpsB).